The primary structure comprises 176 residues: Peptidyl-prolyl cis-trans isomerase cyp6 (176 aa).

Residues 10-173 (FFDIAVNGQH…AKIEITDCGE (164 aa)) form the PPIase cyclophilin-type domain.

This sequence belongs to the cyclophilin-type PPIase family.

The enzyme catalyses [protein]-peptidylproline (omega=180) = [protein]-peptidylproline (omega=0). In terms of biological role, PPIases accelerate the folding of proteins. It catalyzes the cis-trans isomerization of proline imidic peptide bonds in oligopeptides. The sequence is that of Peptidyl-prolyl cis-trans isomerase cyp6 (cyp6) from Rhizopus delemar (strain RA 99-880 / ATCC MYA-4621 / FGSC 9543 / NRRL 43880) (Mucormycosis agent).